The sequence spans 417 residues: L-rhamnose isomerase (417 aa).

3 residues coordinate Mn(2+): histidine 261, aspartate 293, and aspartate 295.

It belongs to the rhamnose isomerase family. The cofactor is Mn(2+).

Its subcellular location is the cytoplasm. The enzyme catalyses L-rhamnopyranose = L-rhamnulose. The protein operates within carbohydrate degradation; L-rhamnose degradation; glycerone phosphate from L-rhamnose: step 1/3. Catalyzes the interconversion of L-rhamnose and L-rhamnulose. This is L-rhamnose isomerase from Oceanobacillus iheyensis (strain DSM 14371 / CIP 107618 / JCM 11309 / KCTC 3954 / HTE831).